The following is a 151-amino-acid chain: 1,4-dihydroxy-2-naphthoyl-CoA hydrolase (151 aa).

Asp19 is an active-site residue.

It belongs to the 4-hydroxybenzoyl-CoA thioesterase family. DHNA-CoA hydrolase subfamily.

It catalyses the reaction 1,4-dihydroxy-2-naphthoyl-CoA + H2O = 1,4-dihydroxy-2-naphthoate + CoA + H(+). Its pathway is cofactor biosynthesis; phylloquinone biosynthesis. It functions in the pathway quinol/quinone metabolism; 1,4-dihydroxy-2-naphthoate biosynthesis; 1,4-dihydroxy-2-naphthoate from chorismate: step 7/7. In terms of biological role, catalyzes the hydrolysis of 1,4-dihydroxy-2-naphthoyl-CoA (DHNA-CoA) to 1,4-dihydroxy-2-naphthoate (DHNA), a reaction involved in phylloquinone (vitamin K1) biosynthesis. This chain is 1,4-dihydroxy-2-naphthoyl-CoA hydrolase, found in Prochlorococcus marinus (strain MIT 9303).